The sequence spans 466 residues: Ribulose bisphosphate carboxylase/oxygenase activase, chloroplastic (466 aa).

A chloroplast-targeting transit peptide spans 1–48; the sequence is MAAAFSSTVGAPASTPTNFLGKKLKKQVTSAVNYHGKSSNINRFKVMA. 156 to 163 lines the ATP pocket; it reads GGKGQGKS. The segment at 429–454 is disordered; that stretch reads QGAQQAGNLPVPEGCTDPVAKNFDPT.

The protein belongs to the RuBisCO activase family.

It is found in the plastid. The protein localises to the chloroplast stroma. In terms of biological role, activation of RuBisCO (ribulose-1,5-bisphosphate carboxylase/oxygenase; EC 4.1.1.39) involves the ATP-dependent carboxylation of the epsilon-amino group of lysine leading to a carbamate structure. This is Ribulose bisphosphate carboxylase/oxygenase activase, chloroplastic (RCA) from Oryza sativa subsp. japonica (Rice).